A 526-amino-acid polypeptide reads, in one-letter code: Probable DNA ligase (526 aa).

Glutamate 228 serves as a coordination point for ATP. Lysine 230 serves as the catalytic N6-AMP-lysine intermediate. 6 residues coordinate ATP: arginine 235, arginine 250, glutamate 279, phenylalanine 319, arginine 391, and lysine 397.

It belongs to the ATP-dependent DNA ligase family. It depends on Mg(2+) as a cofactor.

The enzyme catalyses ATP + (deoxyribonucleotide)n-3'-hydroxyl + 5'-phospho-(deoxyribonucleotide)m = (deoxyribonucleotide)n+m + AMP + diphosphate.. In terms of biological role, DNA ligase that seals nicks in double-stranded DNA during DNA replication, DNA recombination and DNA repair. The sequence is that of Probable DNA ligase from Mycobacterium avium (strain 104).